The primary structure comprises 239 residues: Sugar fermentation stimulation protein homolog (239 aa).

Belongs to the SfsA family.

The chain is Sugar fermentation stimulation protein homolog from Methylobacterium sp. (strain 4-46).